The sequence spans 411 residues: Acetylornithine aminotransferase (411 aa).

Pyridoxal 5'-phosphate-binding positions include G107–T108 and F141. Residue R144 participates in N(2)-acetyl-L-ornithine binding. Residue D227–Q230 participates in pyridoxal 5'-phosphate binding. The residue at position 256 (K256) is an N6-(pyridoxal phosphate)lysine. A N(2)-acetyl-L-ornithine-binding site is contributed by T284. T285 contacts pyridoxal 5'-phosphate.

It belongs to the class-III pyridoxal-phosphate-dependent aminotransferase family. ArgD subfamily. Homodimer. The cofactor is pyridoxal 5'-phosphate.

It localises to the cytoplasm. The enzyme catalyses N(2)-acetyl-L-ornithine + 2-oxoglutarate = N-acetyl-L-glutamate 5-semialdehyde + L-glutamate. The protein operates within amino-acid biosynthesis; L-arginine biosynthesis; N(2)-acetyl-L-ornithine from L-glutamate: step 4/4. The protein is Acetylornithine aminotransferase of Xylella fastidiosa (strain Temecula1 / ATCC 700964).